The following is a 68-amino-acid chain: Disintegrin EMF10B (68 aa).

The region spanning 1 to 68 (ELLQNSGNPC…SDCPRNPVFK (68 aa)) is the Disintegrin domain. Intrachain disulfides connect C10/C33, C24/C30, C29/C54, and C42/C61. The Cell attachment site; atypical (MGD) motif lies at 46-48 (MGD).

It belongs to the venom metalloproteinase (M12B) family. P-II subfamily. P-IIe sub-subfamily. In terms of assembly, heterodimer with EMF10A; disulfide-linked. As to expression, expressed by the venom gland.

The protein localises to the secreted. Functionally, extremely potent and selective inhibitor of integrin alpha-5/beta-1 (ITGA5/ITGB1). Partially inhibits adhesion of cells expressing alpha-IIb/beta-3 (ITGA2B/ITGB3), alpha-V/beta-3 (ITGAV/ITGB3), and alpha-4/beta-1 (ITGA4/ITGB1) to appropriate ligands only at concentration higher than 500 nM. Weakly inhibits ADP-induced platelet aggregation. In Eristicophis macmahoni (Leaf-nosed viper), this protein is Disintegrin EMF10B.